We begin with the raw amino-acid sequence, 154 residues long: MDKMRPRVVDVKEIEPNRKRGGDLRTLLTPVTVGATSGFMGLAIMRPGERISEHYHPYSEEFVYVVEGRLEVDLDGETFPLRADQGLMIPIDMRHRFRNVGDEEARMVFHLSPLAPKPSLGHVDTEAPAISDDVKAYPLVQEESGRPERPGVLS.

The 67-residue stretch at 42 to 108 folds into the Cupin type-2 domain; it reads LAIMRPGERI…NVGDEEARMV (67 aa). The segment at 133–154 is disordered; the sequence is DVKAYPLVQEESGRPERPGVLS. The span at 143–154 shows a compositional bias: basic and acidic residues; it reads ESGRPERPGVLS.

The protein belongs to the SchB/CurC family.

It functions in the pathway antibiotic biosynthesis; curamycin biosynthesis. The sequence is that of Polyketide synthase CurC (curC) from Streptomyces cyaneus (Streptomyces curacoi).